We begin with the raw amino-acid sequence, 460 residues long: ATP synthase subunit beta (460 aa).

150–157 (GGAGVGKT) contacts ATP.

Belongs to the ATPase alpha/beta chains family. As to quaternary structure, F-type ATPases have 2 components, CF(1) - the catalytic core - and CF(0) - the membrane proton channel. CF(1) has five subunits: alpha(3), beta(3), gamma(1), delta(1), epsilon(1). CF(0) has three main subunits: a(1), b(2) and c(9-12). The alpha and beta chains form an alternating ring which encloses part of the gamma chain. CF(1) is attached to CF(0) by a central stalk formed by the gamma and epsilon chains, while a peripheral stalk is formed by the delta and b chains.

It localises to the cell inner membrane. The catalysed reaction is ATP + H2O + 4 H(+)(in) = ADP + phosphate + 5 H(+)(out). Its function is as follows. Produces ATP from ADP in the presence of a proton gradient across the membrane. The catalytic sites are hosted primarily by the beta subunits. The chain is ATP synthase subunit beta from Klebsiella pneumoniae subsp. pneumoniae (strain ATCC 700721 / MGH 78578).